The following is a 300-amino-acid chain: ADP,ATP carrier protein 2 (300 aa).

Solcar repeat units follow at residues 8–100 (VAFI…YKQV), 113–203 (RYFI…ARGM), and 214–299 (VSWA…IKKV). Transmembrane regions (helical) follow at residues 10–39 (FIKD…LLLQ), 77–101 (LANV…KQVF), 112–132 (TRYF…SLCF), 181–201 (VSVQ…DTAR), and 213–233 (YVSW…SYPF). Positions 82 and 94 each coordinate ADP. Arg-237 is a binding site for ADP. The important for transport activity stretch occupies residues 237–242 (RRRMMM). Residues 237 to 242 (RRRMMM) carry the Nucleotide carrier signature motif motif. The helical transmembrane segment at 276 to 293 (AFSNVLRGTGGAFVLVLY) threads the bilayer.

The protein belongs to the mitochondrial carrier (TC 2.A.29) family. As to quaternary structure, monomer.

The protein resides in the mitochondrion inner membrane. It catalyses the reaction ADP(in) + ATP(out) = ADP(out) + ATP(in). The matrix-open state (m-state) is inhibited by the membrane-permeable bongkrekic acid (BKA). The cytoplasmic-open state (c-state) is inhibited by the membrane-impermeable toxic inhibitor carboxyatractyloside (CATR). Its function is as follows. ADP:ATP antiporter that mediates import of ADP into the mitochondrial matrix for ATP synthesis, and export of ATP out to fuel the cell. Cycles between the cytoplasmic-open state (c-state) and the matrix-open state (m-state): operates by the alternating access mechanism with a single substrate-binding site intermittently exposed to either the cytosolic (c-state) or matrix (m-state) side of the inner mitochondrial membrane. The polypeptide is ADP,ATP carrier protein 2 (Anopheles gambiae (African malaria mosquito)).